Reading from the N-terminus, the 1027-residue chain is MAETNNECSIKVLCRFRPLNQAEILRGDKFIPIFQGDDSVIIGGKPYVFDRVFPPNTTQEQVYHACAMQIVKDVLAGYNGTIFAYGQTSSGKTHTMEGKLHDPQLMGIIPRIARDIFNHIYSMDENLEFHIKVSYFEIYLDKIRDLLDVTKTNLSVHEDKNRVPFVKGCTERFVSSPEEILDVIDEGKSNRHVAVTNMNEHSSRSHSIFLINIKQENVETEQKLSGKLYLVDLAGSEKVSKTGAEGAVLDEAKNINKSLSALGNVISALAEGTKSYVPYRDSKMTRILQDSLGGNCRTTMFICCSPSSYNDAETKSTLMFGQRAKTIKNTASVNLELTAEQWKKKYEKEKEKTKAQKETIAKLEAELSRWRNGENVPETERLAGEDSALGAELCEETPVNDNSSIVVRIAPEERQKYEEEIRRLYKQLDDKDDEINQQSQLIEKLKQQMLDQEELLVSTRGDNEKVQRELSHLQSENDAAKDEVKEVLQALEELAVNYDQKSQEVEEKSQQNQLLVDELSQKVATMLSLESELQRLQEVSGHQRKRIAEVLNGLMRDLSEFSVIVGNGEIKLPVEISGAIEEEFTVARLYISKIKSEVKSVVKRCRQLENLQVECHRKMEVTGRELSSCQLLISQHEAKIRSLTEYMQTVELKKRHLEESYDSLSDELARLQAHETVHEVALKDKEPDTQDAEEVKKALELQMENHREAHHRQLARLRDEINEKQKTIDELKDLNQKLQLELEKLQADYERLKNEENEKSAKLQELTFLYERHEQSKQDLKGLEETVARELQTLHNLRKLFVQDVTTRVKKSAEMEPEDSGGIHSQKQKISFLENNLEQLTKVHKQLVRDNADLRCELPKLEKRLRATAERVKALEGALKEAKEGAMKDKRRYQQEVDRIKEAVRYKSSGKRGHSAQIAKPVRPGHYPASSPTNPYGTRSPECISYTNNLFQNYQNLHLQAAPSSTSDMYFASSGATSVAPLASYQKANMDNGNATDINDNRSDLPCGYEAEDQAKLFPLHQETAAS.

An N-acetylalanine modification is found at Ala2. Residues 9-327 (SIKVLCRFRP…LMFGQRAKTI (319 aa)) form the Kinesin motor domain. Residue 86–93 (GQTSSGKT) coordinates ATP. Residues 174 to 315 (VSSPEEILDV…PSSYNDAETK (142 aa)) are microtubule-binding. Positions 271 to 361 (EGTKSYVPYR…KTKAQKETIA (91 aa)) are necessary for interaction with ZFYVE27. A coiled-coil region spans residues 331-906 (ASVNLELTAE…VDRIKEAVRY (576 aa)). Residues 353–1027 (TKAQKETIAK…FPLHQETAAS (675 aa)) are interaction with BICD2. Thr397 carries the phosphothreonine modification. Residues 906 to 937 (YKSSGKRGHSAQIAKPVRPGHYPASSPTNPYG) are disordered. The interval 907-1027 (KSSGKRGHSA…FPLHQETAAS (121 aa)) is globular.

This sequence belongs to the TRAFAC class myosin-kinesin ATPase superfamily. Kinesin family. Kinesin subfamily. As to quaternary structure, oligomer composed of two heavy chains and two light chains. Interacts with GRIP1. Interacts with FMR1 (via C-terminus); this interaction is increased in a mGluR-dependent manner. Interacts with BORCS5. Interacts with ZFYVE27. Interacts with VAPA, VAPB, SURF4, RAB11A (GDP-bound form), RAB11B (GDP-bound form) and RTN3 in a ZFYVE27-dependent manner. Interacts with BICD2. Interacts with DTNB.

Its subcellular location is the cytoplasm. It is found in the perinuclear region. The protein resides in the cytoskeleton. The protein localises to the perikaryon. It catalyses the reaction ATP + H2O + a kinesin associated with a microtubule at position (n) = ADP + phosphate a kinesin associated with a microtubule at position (n+1, toward the plus end).. In terms of biological role, microtubule-dependent motor required for slow axonal transport of neurofilament proteins (NFH, NFM and NFL). Can induce formation of neurite-like membrane protrusions in non-neuronal cells in a ZFYVE27-dependent manner. The ZFYVE27-KIF5A complex contributes to the vesicular transport of VAPA, VAPB, SURF4, RAB11A, RAB11B and RTN3 proteins in neurons. Required for anterograde axonal transportation of MAPK8IP3/JIP3 which is essential for MAPK8IP3/JIP3 function in axon elongation. The sequence is that of Kinesin heavy chain isoform 5A (Kif5a) from Mus musculus (Mouse).